Reading from the N-terminus, the 155-residue chain is UPF0735 ACT domain-containing protein CA_C1234 (155 aa).

Residues 79–154 (TISILIEHRR…NVLKVEIVAM (76 aa)) enclose the ACT domain.

It belongs to the UPF0735 family.

The sequence is that of UPF0735 ACT domain-containing protein CA_C1234 from Clostridium acetobutylicum (strain ATCC 824 / DSM 792 / JCM 1419 / IAM 19013 / LMG 5710 / NBRC 13948 / NRRL B-527 / VKM B-1787 / 2291 / W).